We begin with the raw amino-acid sequence, 760 residues long: General transcription and DNA repair factor IIH helicase subunit XPD (760 aa).

The region spanning 7 to 283 is the Helicase ATP-binding domain; that stretch reads GLLVYFPYDY…KETDEQRLRE (277 aa). Residue 42–49 participates in ATP binding; sequence MPSGTGKT. Residues C116, C134, C155, and C190 each coordinate [4Fe-4S] cluster. Positions 234-237 match the DEAH box motif; that stretch reads DEAH. Residues 438-637 are mediates interaction with MMS19; the sequence is MDASLAIKPV…TQSRILKARL (200 aa). The Nuclear localization signal signature appears at 682-695; sequence KRFARADKRGKLPR.

Belongs to the helicase family. RAD3/XPD subfamily. In terms of assembly, component of the 7-subunit TFIIH core complex composed of XPB/ERCC3, XPD/ERCC2, GTF2H1, GTF2H2, GTF2H3, GTF2H4 and GTF2H5, which is active in NER. The core complex associates with the 3-subunit CDK-activating kinase (CAK) module composed of CCNH/cyclin H, CDK7 and MNAT1 to form the 10-subunit holoenzyme (holo-TFIIH) active in transcription. The interaction with GTF2H2 results in the stimulation of the 5'--&gt;3' helicase activity. Component of the MMXD complex, which includes CIAO1, ERCC2, CIAO2B, MMS19 and SLC25A5. Interacts with CIAO1 and CIAO2B; the interaction WITH CIAO2B is direct. Interacts with ATF7IP. Interacts directly with MMS19. Part of TBP-based Pol II pre-initiation complex (PIC), in which Pol II core assembles with general transcription factors and other specific initiation factors including GTF2E1, GTF2E2, GTF2F1, GTF2F2, TCEA1, ERCC2, ERCC3, GTF2H2, GTF2H3, GTF2H4, GTF2H5, GTF2A1, GTF2A2, GTF2B and TBP; this large multi-subunit PIC complex mediates DNA unwinding and targets Pol II core to the transcription start site where the first phosphodiester bond forms. It depends on Mg(2+) as a cofactor. [4Fe-4S] cluster serves as cofactor. ISGylated.

It is found in the nucleus. It localises to the cytoplasm. Its subcellular location is the cytoskeleton. The protein resides in the spindle. It carries out the reaction Couples ATP hydrolysis with the unwinding of duplex DNA at the replication fork by translocating in the 5'-3' direction. This creates two antiparallel DNA single strands (ssDNA). The leading ssDNA polymer is the template for DNA polymerase III holoenzyme which synthesizes a continuous strand.. The enzyme catalyses ATP + H2O = ADP + phosphate + H(+). Functionally, ATP-dependent 5'-3' DNA helicase, component of the general transcription and DNA repair factor IIH (TFIIH) core complex, which is involved in general and transcription-coupled nucleotide excision repair (NER) of damaged DNA and, when complexed to CDK-activating kinase (CAK), involved in transcription by RNA polymerase II. In NER, TFIIH acts by opening DNA around the lesion to allow the excision of the damaged oligonucleotide and its replacement by a new DNA fragment. The ATP-dependent helicase activity of XPD/ERCC2 is required for DNA opening. In transcription, TFIIH has an essential role in transcription initiation. When the pre-initiation complex (PIC) has been established, TFIIH is required for promoter opening and promoter escape. Phosphorylation of the C-terminal tail (CTD) of the largest subunit of RNA polymerase II by the kinase module CAK controls the initiation of transcription. XPD/ERCC2 acts by forming a bridge between CAK and the core-TFIIH complex. Involved in the regulation of vitamin-D receptor activity. As part of the mitotic spindle-associated MMXD complex it plays a role in chromosome segregation. Might have a role in aging process and could play a causative role in the generation of skin cancers. This is General transcription and DNA repair factor IIH helicase subunit XPD (ERCC2) from Bos taurus (Bovine).